Here is a 78-residue protein sequence, read N- to C-terminus: Broad mercury transporter MerE (78 aa).

Transmembrane regions (helical) follow at residues 19–39 (LWGA…AAVL) and 47–67 (FLGE…VLAV).

The protein resides in the cell inner membrane. Broad mercury transporter that mediates the transport of both CH(3)Hg(I) and Hg(II) across the membrane. This Shigella flexneri protein is Broad mercury transporter MerE.